The sequence spans 228 residues: Phosphoglycolate phosphatase (228 aa).

Residue Asp-9 is the Nucleophile of the active site. Positions 9 and 11 each coordinate Mg(2+). Position 151 (Lys-151) interacts with substrate. Positions 174 and 178 each coordinate Mg(2+).

The protein belongs to the archaeal SPP-like hydrolase family. Mg(2+) serves as cofactor.

The enzyme catalyses 2-phosphoglycolate + H2O = glycolate + phosphate. Functionally, catalyzes the dephosphorylation of 2-phosphoglycolate. This is Phosphoglycolate phosphatase from Pyrobaculum aerophilum (strain ATCC 51768 / DSM 7523 / JCM 9630 / CIP 104966 / NBRC 100827 / IM2).